Here is a 485-residue protein sequence, read N- to C-terminus: Subtilisin-like protease 1 (485 aa).

Residues 1-19 form the signal peptide; sequence MGIFRFISISLAAVSAANA. Positions 20-116 are excised as a propeptide; that stretch reads GHILSMGHAK…VEPDTTITIH (97 aa). The region spanning 34–116 is the Inhibitor I9 domain; it reads SYIVVMKDGT…VEPDTTITIH (83 aa). The region spanning 126 to 400 is the Peptidase S8 domain; the sequence is SWGLARISSQ…NILINNGDAK (275 aa). Residues D158 and H190 each act as charge relay system in the active site. N251 carries an N-linked (GlcNAc...) asparagine glycan. S345 functions as the Charge relay system in the catalytic mechanism. The span at 377–394 shows a compositional bias: polar residues; that stretch reads GTSSVTNPGPGTRTNILI. The segment at 377-462 is disordered; it reads GTSSVTNPGP…HTPFPNDDFN (86 aa). Positions 409–418 are enriched in pro residues; the sequence is PSQPPKPSQP. Positions 419–428 are enriched in low complexity; that stretch reads SKPQQPSEPQ. Pro residues predominate over residues 433 to 455; it reads PQEPAPGQPAPAPAPVPQHPHTP.

This sequence belongs to the peptidase S8 family.

The protein localises to the secreted. Functionally, secreted subtilisin-like serine protease with keratinolytic activity that contributes to pathogenicity. The polypeptide is Subtilisin-like protease 1 (SUB1) (Arthroderma otae (strain ATCC MYA-4605 / CBS 113480) (Microsporum canis)).